The primary structure comprises 394 residues: Guanine nucleotide-binding protein G(s) subunit alpha isoforms short (394 aa).

The segment at Met1–Asn23 is disordered. Gly2 is lipidated: N-palmitoyl glycine. Cys3 carries the S-palmitoyl cysteine lipid modification. Positions Lys8–Asn23 are enriched in basic and acidic residues. The region spanning Ala39–Leu394 is the G-alpha domain. Residues Arg42–Thr55 form a G1 motif region. Gly47–Thr55 serves as a coordination point for GTP. Ser54 is a binding site for Mg(2+). A disordered region spans residues Phe68–Lys91. The segment at Asp196–Thr204 is G2 motif. GTP contacts are provided by residues Leu197–Thr204, Asp223–Gln227, and Asn292–Asp295. A Mg(2+)-binding site is contributed by Thr204. The G3 motif stretch occupies residues Phe219–Arg228. Residues Ile288–Asp295 form a G4 motif region. Residue Lys300 forms a Glycyl lysine isopeptide (Lys-Gly) (interchain with G-Cter in ubiquitin) linkage. Ser352 is subject to Phosphoserine. The tract at residues Thr364 to Thr369 is G5 motif. A GTP-binding site is contributed by Ala366.

Belongs to the G-alpha family. G(s) subfamily. Heterotrimeric G proteins are composed of 3 units; alpha, beta and gamma. The alpha chain contains the guanine nucleotide binding site. Component of the TAS2R14-GNAS2 complex, consisting of TAS2R14, GNAS2, GNB1 and GNG2; within the complex interacts with TAS2R14; this complex plays a role in the perception of bitterness. Interacts with CRY1; the interaction may block GPCR-mediated regulation of cAMP concentrations. Interacts with ADCY6 and stimulates its adenylyl cyclase activity. Interacts with ADCY2 and ADCY5. Stimulates the ADCY5 adenylyl cyclase activity. Interacts (GDP-bound form) with RIC8B; promoting GNAS folding and association with the plasma membrane. Interaction with SASH1. Interacts with GASL2L2.

It is found in the cell membrane. The catalysed reaction is GTP + H2O = GDP + phosphate + H(+). Functionally, guanine nucleotide-binding proteins (G proteins) function as transducers in numerous signaling pathways controlled by G protein-coupled receptors (GPCRs). The alpha chain contains the guanine nucleotide binding site and alternates between an active, GTP-bound state and an inactive, GDP-bound state. Signaling by an activated GPCR promotes GDP release and GTP binding. The alpha subunit has a low GTPase activity that converts bound GTP to GDP, thereby terminating the signal. Both GDP release and GTP hydrolysis are modulated by numerous regulatory proteins. Signaling involves the activation of adenylyl cyclases, resulting in increased levels of the signaling molecule cAMP. Functions downstream of beta-adrenergic receptors. Stimulates the Ras signaling pathway via RAPGEF2. This Bos taurus (Bovine) protein is Guanine nucleotide-binding protein G(s) subunit alpha isoforms short (GNAS).